We begin with the raw amino-acid sequence, 354 residues long: Probable RNA methyltransferase AZOSEA28700 (354 aa).

Residue E88 is the Proton acceptor of the active site. Positions 91–317 (LLPRDGLCVS…TKLRHSAGQD (227 aa)) constitute a Radical SAM core domain. A disulfide bridge connects residues C98 and C322. Residues C105, C109, and C112 each coordinate [4Fe-4S] cluster. S-adenosyl-L-methionine contacts are provided by residues 150–151 (GE), S180, 203–205 (SLH), and N279. The active-site S-methylcysteine intermediate is the C322.

The protein belongs to the radical SAM superfamily. RlmN family. It depends on [4Fe-4S] cluster as a cofactor.

The protein resides in the cytoplasm. The protein is Probable RNA methyltransferase AZOSEA28700 of Aromatoleum aromaticum (strain DSM 19018 / LMG 30748 / EbN1) (Azoarcus sp. (strain EbN1)).